The primary structure comprises 243 residues: Coproheme decarboxylase (243 aa).

Tyr145 is a catalytic residue. Residue His168 coordinates Fe-coproporphyrin III.

It belongs to the ChdC family. Type 2 subfamily. Fe-coproporphyrin III is required as a cofactor.

The enzyme catalyses Fe-coproporphyrin III + 2 H2O2 + 2 H(+) = heme b + 2 CO2 + 4 H2O. It catalyses the reaction Fe-coproporphyrin III + H2O2 + H(+) = harderoheme III + CO2 + 2 H2O. It carries out the reaction harderoheme III + H2O2 + H(+) = heme b + CO2 + 2 H2O. The protein operates within porphyrin-containing compound metabolism; protoheme biosynthesis. Involved in coproporphyrin-dependent heme b biosynthesis. Catalyzes the decarboxylation of Fe-coproporphyrin III (coproheme) to heme b (protoheme IX), the last step of the pathway. The reaction occurs in a stepwise manner with a three-propionate intermediate. This chain is Coproheme decarboxylase, found in Streptomyces coelicolor (strain ATCC BAA-471 / A3(2) / M145).